Here is a 167-residue protein sequence, read N- to C-terminus: Transmembrane protein 229B (167 aa).

The Cytoplasmic segment spans residues 1-14 (MASAEPLTALSRWY). Residues 15–35 (LYAIHGYFCEVMFTAAWEFVV) form a helical membrane-spanning segment. Residues 36–40 (NFNWK) lie on the Extracellular side of the membrane. Residues 41 to 61 (FPGVTSVWALFIYGTSILIVE) form a helical membrane-spanning segment. The Cytoplasmic portion of the chain corresponds to 62–73 (RMYLRLRGRCPL). A helical membrane pass occupies residues 74-94 (LLRCLIYTLWTYLWEFTTGFI). Topologically, residues 95-111 (LRQFNACPWDYSQFDFD) are extracellular. The chain crosses the membrane as a helical span at residues 112–132 (FMGLITLEYAVPWFCGALLVE). Topologically, residues 133-167 (QFVIRNTLRLRFDKDAEPGEPSGALALANGHVKTD) are cytoplasmic.

This sequence belongs to the TMEM229 family.

It localises to the membrane. This is Transmembrane protein 229B (TMEM229B) from Bos taurus (Bovine).